A 223-amino-acid chain; its full sequence is Carnitine transport permease protein OpuCD (223 aa).

The 181-residue stretch at 22–202 (FWRHFLMSAY…VMAILADVLL (181 aa)) folds into the ABC transmembrane type-1 domain. 5 helical membrane-spanning segments follow: residues 27-47 (LMSA…GVYI), 63-83 (IIQT…MGLG), 87-107 (VVLS…YTGI), 148-168 (ALVI…GGLG), and 182-202 (AIIL…DVLL).

The protein belongs to the binding-protein-dependent transport system permease family. In terms of assembly, the complex is composed of two ATP-binding proteins (OpuCA), two transmembrane proteins (OpuCB and OpuCD) and a solute-binding protein (OpuCC).

The protein localises to the cell membrane. Functionally, part of the ABC transporter complex OpuCABCD involved in carnitine uptake. Probably responsible for the translocation of the substrate across the membrane. Involved, with BetL and GbuABC, in osmoprotection and cryoprotection of Listeria. Can also mediate weak glycine betaine transport. This chain is Carnitine transport permease protein OpuCD (opuCD), found in Listeria monocytogenes serotype 1/2a (strain 10403S).